The chain runs to 391 residues: Multidrug resistance protein MdtL (391 aa).

Transmembrane regions (helical) follow at residues 4–24 (FLIC…MYLV), 42–62 (IAFS…GKVA), 69–89 (PVAI…SLAE), 93–113 (LFLA…VVAF), 131–151 (LLNG…HLIM), 158–178 (SLFW…LFIL), 203–222 (FFLS…LTFV), 245–265 (ALTA…LGIF), 269–289 (TLMI…AVSP), 293–313 (ISLF…GVAM), 324–346 (AGVA…IWLA), and 363–383 (ACSI…PVAA).

The protein belongs to the major facilitator superfamily. DHA1 family. MdtL (TC 2.A.1.2.22) subfamily.

Its subcellular location is the cell inner membrane. Functionally, confers resistance to chloramphenicol. In Escherichia fergusonii (strain ATCC 35469 / DSM 13698 / CCUG 18766 / IAM 14443 / JCM 21226 / LMG 7866 / NBRC 102419 / NCTC 12128 / CDC 0568-73), this protein is Multidrug resistance protein MdtL.